Here is a 96-residue protein sequence, read N- to C-terminus: Nucleoid-associated protein CF0672 (96 aa).

Belongs to the YbaB/EbfC family. Homodimer.

It is found in the cytoplasm. It localises to the nucleoid. Its function is as follows. Binds to DNA and alters its conformation. May be involved in regulation of gene expression, nucleoid organization and DNA protection. This is Nucleoid-associated protein CF0672 from Chlamydia felis (strain Fe/C-56) (Chlamydophila felis).